We begin with the raw amino-acid sequence, 771 residues long: MIPADIIASIAGLVNEKDIEKITSEYQDNIWEFVESLVTHVLASNHVGYSDYNTSSFISEELARQKLSCGLNIPNAVSKSLWALHLAHEHVEKLKDLSDIPPIGYRVILEFYLVWQQLLIDPEETIRTEIEPIMEKLRVLIAEENDAFTSEDRCQIQLEMAAVRFQFYEYDKADNLIKSASEECQLNMDLSGMMGKRTRFQQRDIAQLVLIHKDPSTTGTPLPPDSDIPQSLDMNDDTLLEQVAITEQGARVDGRTLNACQLSCLLWIARHESATHRHDVLVHERCSPVLDTVIAARRYWSIQAAALLARAELERGRVRQVDRSCTQSELVVKLQQGVDDPVLIKDRLLRTSYILASGLTPFWQSSVLLAGILNSLGCTSEALLILEKLEMWDGVIDCYKQLGQMDKAETLIRRLIEQKPNDSMLHVYLGDITRNLEYFTKAIELSDDRNARAHRSLGHLLLMDKKFEEAYKHLRRSLELQPIQLGTWFNAGYCAWKLENFKESTQCYHRCVSLQPDHFEAWNNLSAAYIRHGQKPKAWKLLQEALKYNYEHPNVWENYMLLSVDVGEFSQAIQAYHRLLDMNKRGADDEVLELIAQTLLRREAEISMDESEDKAQNEAENRKEKEEMIKLLARISANHQTLSPKTLRVYALLKKPSVLSSETRTEFEKYVRLLEKSLAAANGKLTWPKEEKLALEVVETAVRLAEDRLELAKFIASDTSVKEASAKVRLSLRGILTRLDKDSGSRVSGDETEKLQEIVEVAKSLLDSVAI.

TPR repeat units follow at residues 389-415, 416-449, 451-484, 485-518, 520-552, and 553-586; these read LEMW…IRRL, IEQK…SDDR, ARAH…QPIQ, LGTW…QPDH, EAWN…NYEH, and PNVW…NKRG.

The protein belongs to the TTC27 family. Expressed in the spermatheca.

Its subcellular location is the cytoplasm. Functionally, developmental protein required for cell fate determination in both the germline and seam cells of the developing epidermis. Specifically, involved in sex determination and may function in parallel or downstream of other sex determination factors, including tra-2 and fem-3, to promote oogenesis in its role in the regulation of the switch from spermatogenesis to oogenesis in the gonads. Also implicated in the mitosis to meiosis switch in distal tip cells. The polypeptide is Tetratricopeptide repeat-containing protein trd-1 (Caenorhabditis elegans).